Reading from the N-terminus, the 89-residue chain is UPF0213 protein HQ_3675A (89 aa).

A GIY-YIG domain is found at 3–78 (DYHYVYIVEC…KSYTREKKQQ (76 aa)).

This sequence belongs to the UPF0213 family.

This Haloquadratum walsbyi (strain DSM 16790 / HBSQ001) protein is UPF0213 protein HQ_3675A.